Here is an 838-residue protein sequence, read N- to C-terminus: Rho GTPase-activating protein 12 (838 aa).

Positions 10-72 (AGQAYIEVEY…PAQYVKEVTR (63 aa)) constitute an SH3 domain. Polar residues-rich tracts occupy residues 155–172 (GKFN…QNRT) and 189–198 (TSFSQEQSCD). Residues 155 to 239 (GKFNSDSHSP…PPNQGRPDSP (85 aa)) are disordered. Residue serine 163 is modified to Phosphoserine. A phosphoserine mark is found at serine 199, serine 211, and serine 213. Phosphothreonine is present on residues threonine 228 and threonine 229. A Phosphoserine modification is found at serine 238. A Phosphotyrosine modification is found at tyrosine 241. The 34-residue stretch at 263–296 (IQVNGEWETHKDSSGRCYYYNRTTQERTWKPPRW) folds into the WW 1 domain. Positions 291 to 302 (WKPPRWARDVST) are enriched in basic and acidic residues. The interval 291-346 (WKPPRWARDVSTSRDFQSPGEQEPLSSEENYHSSCFSQSDSQCGSPPRGWSEELDE) is disordered. A compositionally biased stretch (polar residues) spans 303–334 (SRDFQSPGEQEPLSSEENYHSSCFSQSDSQCG). The 34-residue stretch at 355 to 388 (DYTKEKWLKHVDDQGRQYYYSADGSRSEWELPKY) folds into the WW 2 domain. Residues 425 to 456 (DSNDKDSPTTTKLCLPENESPPTSSKHQDPGQ) form a disordered region. A PH domain is found at 466–567 (KITENGKKVR…WFKVLSSTIN (102 aa)). A compositionally biased stretch (acidic residues) spans 572-582 (EADEAAEEETP). The segment at 572–620 (EADEAAEEETPDSPGVEKHDKEKDQKELKKLRSMKGSSMDSSEQKKTKK) is disordered. Residue serine 584 is modified to Phosphoserine. Residues 586 to 601 (GVEKHDKEKDQKELKK) are compositionally biased toward basic and acidic residues. Residues 648–836 (SNLANLCQRE…LILLELSTVF (189 aa)) enclose the Rho-GAP domain.

In terms of biological role, GTPase activator for the Rho-type GTPases by converting them to an inactive GDP-bound state. The sequence is that of Rho GTPase-activating protein 12 (Arhgap12) from Mus musculus (Mouse).